Here is a 1364-residue protein sequence, read N- to C-terminus: DNA-directed RNA polymerase subunit beta (1364 aa).

Belongs to the RNA polymerase beta chain family. The RNAP catalytic core consists of 2 alpha, 1 beta, 1 beta' and 1 omega subunit. When a sigma factor is associated with the core the holoenzyme is formed, which can initiate transcription.

It carries out the reaction RNA(n) + a ribonucleoside 5'-triphosphate = RNA(n+1) + diphosphate. Its function is as follows. DNA-dependent RNA polymerase catalyzes the transcription of DNA into RNA using the four ribonucleoside triphosphates as substrates. In Desulfatibacillum aliphaticivorans, this protein is DNA-directed RNA polymerase subunit beta.